Reading from the N-terminus, the 228-residue chain is Upstream activation factor subunit UAF30 (228 aa).

The DEK-C domain maps to 1–56 (MAELNDYSTMIDILLSDMDLETVTTKKVRMALKEVYAIDVESQGKAINKLIRKHLD). The segment covering 89 to 111 (SKRSSGEEKNDSETKGTHVEKKK) has biased composition (basic and acidic residues). The tract at residues 89–118 (SKRSSGEEKNDSETKGTHVEKKKGTVSKSP) is disordered. The SWIB/MDM2 domain maps to 119 to 195 (ISTRKVTLSK…HKILASHMTE (77 aa)). The tract at residues 209–228 (VRRKEKPIVSDSEQSDTKGI) is disordered. Ser218, Ser220, and Ser223 each carry phosphoserine.

In terms of assembly, component of the UAF (upstream activation factor) complex which consists of UAF30, RRN5, RRN9, RRN10, and histones H3 and H4.

It is found in the nucleus. Its subcellular location is the nucleolus. Nonessential component of the UAF (upstream activation factor) complex which interacts with the upstream element of the RNA polymerase I promoter and forms a stable preinitiation complex. Together with SPT15/TBP UAF seems to stimulate basal transcription to a fully activated level. UAF30 seems to play a role in silencing transcription by RNA polymerase II. The polypeptide is Upstream activation factor subunit UAF30 (UAF30) (Saccharomyces cerevisiae (strain ATCC 204508 / S288c) (Baker's yeast)).